Here is a 147-residue protein sequence, read N- to C-terminus: MNRNDITEKIITTKVAKGITWESVAKKVGLSKEWVTAGCLGQMTFDEKQAKVVGKIFGLTAEEQKWLQVVPYKGSLPTPVPTDPLIYRWYEIVSVYGTTIKELIHEEFGDGIMSAIDFSMDIVRQPDPKGDRVNVVLSGKFLPYKTY.

Catalysis depends on residues Arg-88, Glu-91, and Ser-114.

The protein belongs to the cyanase family.

It catalyses the reaction cyanate + hydrogencarbonate + 3 H(+) = NH4(+) + 2 CO2. Catalyzes the reaction of cyanate with bicarbonate to produce ammonia and carbon dioxide. The sequence is that of Cyanate hydratase from Polaromonas sp. (strain JS666 / ATCC BAA-500).